Here is a 129-residue protein sequence, read N- to C-terminus: MVRIAGTDIPDNKQVYFSLQYIFGIGPARSEKVLVQAGVDKTIRVNKLTDEEINRLREIIDKEYRVEGDLRKEITLNIKRLIDIGCYRGIRHKHNLPVRGQRTKTNARTRRGPRKTVAGRGQKRGATKK.

A compositionally biased stretch (basic residues) spans 95–114 (NLPVRGQRTKTNARTRRGPR). Positions 95 to 129 (NLPVRGQRTKTNARTRRGPRKTVAGRGQKRGATKK) are disordered.

Belongs to the universal ribosomal protein uS13 family. Part of the 30S ribosomal subunit. Forms a loose heterodimer with protein S19. Forms two bridges to the 50S subunit in the 70S ribosome.

In terms of biological role, located at the top of the head of the 30S subunit, it contacts several helices of the 16S rRNA. In the 70S ribosome it contacts the 23S rRNA (bridge B1a) and protein L5 of the 50S subunit (bridge B1b), connecting the 2 subunits; these bridges are implicated in subunit movement. Contacts the tRNAs in the A and P-sites. The polypeptide is Small ribosomal subunit protein uS13 (Dehalococcoides mccartyi (strain ATCC BAA-2100 / JCM 16839 / KCTC 5957 / BAV1)).